Consider the following 340-residue polypeptide: Phosphate acyltransferase (340 aa).

The interval 285 to 340 is disordered; sequence WRQSGRPARHRGQEPRRHRQPRFWLCHRRGRRRSPRQRNRTHPGTGQPPAGCAGAR. The segment covering 300 to 325 has biased composition (basic residues); the sequence is RRHRQPRFWLCHRRGRRRSPRQRNRT.

The protein belongs to the PlsX family. In terms of assembly, homodimer. Probably interacts with PlsY.

It localises to the cytoplasm. It catalyses the reaction a fatty acyl-[ACP] + phosphate = an acyl phosphate + holo-[ACP]. The protein operates within lipid metabolism; phospholipid metabolism. Its function is as follows. Catalyzes the reversible formation of acyl-phosphate (acyl-PO(4)) from acyl-[acyl-carrier-protein] (acyl-ACP). This enzyme utilizes acyl-ACP as fatty acyl donor, but not acyl-CoA. The protein is Phosphate acyltransferase of Laribacter hongkongensis (strain HLHK9).